A 2698-amino-acid polypeptide reads, in one-letter code: Zinc finger protein 292 (2698 aa).

The segment at tyrosine 567–histidine 589 adopts a C2H2-type 1 zinc-finger fold. Serine 654 bears the Phosphoserine mark. C2H2-type zinc fingers lie at residues phenylalanine 681–histidine 705, valine 722–histidine 744, tyrosine 750–histidine 774, alanine 779–histidine 803, tyrosine 807–histidine 831, and phenylalanine 1085–histidine 1110. A compositionally biased stretch (basic and acidic residues) spans serine 822–proline 834. Residues serine 822–glutamine 894 form a disordered region. Lysine 1104 bears the N6-acetyllysine mark. Serine 1146 is modified (phosphoserine). Polar residues predominate over residues asparagine 1278–threonine 1325. Residues asparagine 1278–arginine 1349 are disordered. The C2H2-type 8; degenerate zinc finger occupies phenylalanine 1361–arginine 1383. Composition is skewed to polar residues over residues phenylalanine 1574–serine 1603 and serine 1624–leucine 1633. A disordered region spans residues phenylalanine 1574 to aspartate 1656. 2 consecutive C2H2-type zinc fingers follow at residues phenylalanine 1879–histidine 1904 and phenylalanine 1924–histidine 1949. Residues proline 1964 to glutamine 1997 form a disordered region. Residues serine 1971–lysine 1984 show a composition bias toward polar residues. Lysine 2020 is modified (N6-acetyllysine). Residues glutamine 2021–glutamate 2032 are compositionally biased toward basic and acidic residues. The interval glutamine 2021–valine 2075 is disordered. A compositionally biased stretch (polar residues) spans valine 2038 to asparagine 2051. Positions threonine 2054–lysine 2064 are enriched in basic residues. C2H2-type zinc fingers lie at residues tyrosine 2091 to histidine 2116, phenylalanine 2149 to histidine 2174, phenylalanine 2193 to histidine 2218, and tyrosine 2233 to histidine 2258. A compositionally biased stretch (basic residues) spans histidine 2262–lysine 2271. The interval histidine 2262 to lysine 2323 is disordered. The C2H2-type 15 zinc finger occupies tyrosine 2362–histidine 2386. Disordered regions lie at residues glycine 2411–aspartate 2454, leucine 2467–proline 2553, and lysine 2580–lysine 2608. A compositionally biased stretch (basic and acidic residues) spans lysine 2421–asparagine 2437. The span at glutamate 2470–glutamate 2488 shows a compositional bias: polar residues. Composition is skewed to basic and acidic residues over residues phenylalanine 2489–lysine 2501 and lysine 2580–serine 2590. Over residues arginine 2596–valine 2606 the composition is skewed to basic residues.

This sequence belongs to the krueppel C2H2-type zinc-finger protein family. Expressed in postnatal day 1 (P1) pituitary. Also detected in presomatotrophic cell line GHFT1-5.

It localises to the nucleus. In terms of biological role, may be involved in transcriptional regulation. The polypeptide is Zinc finger protein 292 (Mus musculus (Mouse)).